A 152-amino-acid chain; its full sequence is MTITDLVLILFIAALLAYALYDQFIMPRRNGPTQLSIALLRRSRVDSVIFVGLVAILIYNNVTSHGAQMTTWLLSALALMGFYIFWIRTPRIIFKQHGFFFANVWIEYNRIKEMNLSEDGVLVMQLEQRRLLIRVRNIDDLEKIYKLLIENQ.

The next 3 membrane-spanning stretches (helical) occupy residues 6 to 26, 45 to 65, and 67 to 87; these read LVLI…QFIM, VDSV…VTSH, and AQMT…IFWI.

It belongs to the UPF0266 family.

The protein localises to the cell inner membrane. The polypeptide is UPF0266 membrane protein YobD (Salmonella arizonae (strain ATCC BAA-731 / CDC346-86 / RSK2980)).